Reading from the N-terminus, the 225-residue chain is Ribose-5-phosphate isomerase A (225 aa).

Residues 32–35, 85–88, and 98–101 contribute to the substrate site; these read TGST, DGAD, and KGGG. The Proton acceptor role is filled by Glu107. Substrate is bound at residue Lys125.

The protein belongs to the ribose 5-phosphate isomerase family. Homodimer.

It carries out the reaction aldehydo-D-ribose 5-phosphate = D-ribulose 5-phosphate. It functions in the pathway carbohydrate degradation; pentose phosphate pathway; D-ribose 5-phosphate from D-ribulose 5-phosphate (non-oxidative stage): step 1/1. In terms of biological role, catalyzes the reversible conversion of ribose-5-phosphate to ribulose 5-phosphate. In Marinobacter nauticus (strain ATCC 700491 / DSM 11845 / VT8) (Marinobacter aquaeolei), this protein is Ribose-5-phosphate isomerase A.